Here is a 38-residue protein sequence, read N- to C-terminus: Large ribosomal subunit protein bL36A (38 aa).

This sequence belongs to the bacterial ribosomal protein bL36 family.

This Prochlorococcus marinus (strain MIT 9515) protein is Large ribosomal subunit protein bL36A.